Reading from the N-terminus, the 295-residue chain is Origin of replication complex subunit 6 (295 aa).

A disordered region spans residues 212–295; the sequence is PSKRKHDDDS…MALEVSSAAN (84 aa). A compositionally biased stretch (acidic residues) spans 220-236; sequence DSDSSGESSGDDQDELD. Polar residues predominate over residues 254–263; the sequence is WKSSVLSNKQ.

This sequence belongs to the ORC6 family. As to quaternary structure, component of the origin recognition complex (ORC) composed of at least ORC1, ORC2, ORC3, ORC4, ORC5 and ORC6. ORC is regulated in a cell-cycle and development dependent manner. It is sequentially assembled at the exit from anaphase of mitosis and disassembled as cells enter S phase.

The protein localises to the nucleus. In terms of biological role, component of the origin recognition complex (ORC) that binds origins of replication. DNA-binding is ATP-dependent. The specific DNA sequences that define origins of replication have not been identified yet. ORC is required to assemble the pre-replication complex necessary to initiate DNA replication. In Oryza sativa subsp. japonica (Rice), this protein is Origin of replication complex subunit 6.